Reading from the N-terminus, the 249-residue chain is ATP synthase subunit a, chloroplastic (249 aa).

Transmembrane regions (helical) follow at residues 40 to 60, 97 to 117, 136 to 156, 201 to 221, and 222 to 242; these read QVLI…VLAI, VPFI…GALL, INTT…AGLS, LVVV…VMFL, and GLFT…AYIG.

Belongs to the ATPase A chain family. F-type ATPases have 2 components, CF(1) - the catalytic core - and CF(0) - the membrane proton channel. CF(1) has five subunits: alpha(3), beta(3), gamma(1), delta(1), epsilon(1). CF(0) has four main subunits: a, b, b' and c.

It is found in the plastid. Its subcellular location is the chloroplast thylakoid membrane. Its function is as follows. Key component of the proton channel; it plays a direct role in the translocation of protons across the membrane. This chain is ATP synthase subunit a, chloroplastic, found in Lepidium virginicum (Virginia pepperweed).